A 1486-amino-acid polypeptide reads, in one-letter code: Chromosome partition protein MukB (1486 aa).

34 to 41 contacts ATP; that stretch reads GGNGAGKS. Coiled coils occupy residues 326–418, 444–480, and 509–603; these read LEAD…QYNQ, LETFQAKELEATEKMLSLEQKMSMAQTAHSQFEQAYQ, and RHLA…RAPV. A flexible hinge region spans residues 666–783; the sequence is PGGSEDQRLN…EVPLFGRAAR (118 aa). Coiled-coil stretches lie at residues 835–923, 977–1115, and 1209–1266; these read EAEI…AKLE, EMLS…TAKA, and VEAI…QNVS.

This sequence belongs to the SMC family. MukB subfamily. In terms of assembly, homodimerization via its hinge domain. Binds to DNA via its C-terminal region. Interacts, and probably forms a ternary complex, with MukE and MukF via its C-terminal region. The complex formation is stimulated by calcium or magnesium. Interacts with tubulin-related protein FtsZ.

Its subcellular location is the cytoplasm. The protein localises to the nucleoid. In terms of biological role, plays a central role in chromosome condensation, segregation and cell cycle progression. Functions as a homodimer, which is essential for chromosome partition. Involved in negative DNA supercoiling in vivo, and by this means organize and compact chromosomes. May achieve or facilitate chromosome segregation by condensation DNA from both sides of a centrally located replisome during cell division. The protein is Chromosome partition protein MukB of Escherichia coli O17:K52:H18 (strain UMN026 / ExPEC).